Reading from the N-terminus, the 1369-residue chain is Probable tegument protein antigen 3 (1369 aa).

Positions 1347–1369 are disordered; it reads DRRGAVPHDNPQYIPMDAMDPSQ.

The protein localises to the virion tegument. In Connochaetes taurinus (Blue wildebeest), this protein is Probable tegument protein antigen 3 (3).